We begin with the raw amino-acid sequence, 173 residues long: Photosystem I assembly protein Ycf3 (173 aa).

TPR repeat units follow at residues 35-68 (AYVYYRDGLSAQNDGDYAEALENYEESLKLEENP), 72-105 (GETLKNMAIIYMSNGEEDRALATYQKALDENPKQ), and 120-153 (GRTAEEEGRRDDADGWFDQAAEVWTQAVRLNPGG).

It belongs to the Ycf3 family.

It is found in the cellular thylakoid membrane. Essential for the assembly of the photosystem I (PSI) complex. May act as a chaperone-like factor to guide the assembly of the PSI subunits. The sequence is that of Photosystem I assembly protein Ycf3 from Synechococcus sp. (strain WH7803).